Here is a 780-residue protein sequence, read N- to C-terminus: WD repeat-containing protein 27 (780 aa).

13 WD repeats span residues 3 to 56, 61 to 100, 111 to 150, 154 to 193, 200 to 236, 291 to 335, 342 to 385, 500 to 540, 544 to 582, 588 to 639, 644 to 685, 691 to 738, and 752 to 779; these read TPPE…VWSS, HQLLTLQGHHQLITAVVFGNQIDPLLLCSASEDYIIMWNV, LTPRGTILGSLLQTVLCLRFSLDDRAIAVCAGNKISVMDV, SVLVELKGHQGSVTAVEFCPWQAHTLISVSEDRSFKVWDF, YSSSILTAYPLLNLLINEENQQLVTGSADGQLWIFSL, FPIL…LASF, HFKE…VLEI, NLSR…VFNA, GPPAAFSGHDGAVSTICWSHDKRWLLSTGRDRTLRVWSV, MLLL…RYKP, KPIF…VFDL, AAVL…LWDL, and AFCTVLQDTQIRLLKWPSTQQLLSLSQP.

This chain is WD repeat-containing protein 27 (Wdr27), found in Mus musculus (Mouse).